Here is a 458-residue protein sequence, read N- to C-terminus: Putative U-box domain-containing protein 46 (458 aa).

The U-box domain maps to 71 to 144 (EVPKEFICTL…TQWCLVNKYD (74 aa)). ARM repeat units lie at residues 241-281 (ESNK…SLSA) and 283-322 (DSNK…NLCI).

It carries out the reaction S-ubiquitinyl-[E2 ubiquitin-conjugating enzyme]-L-cysteine + [acceptor protein]-L-lysine = [E2 ubiquitin-conjugating enzyme]-L-cysteine + N(6)-ubiquitinyl-[acceptor protein]-L-lysine.. Its pathway is protein modification; protein ubiquitination. In terms of biological role, functions as an E3 ubiquitin ligase. The sequence is that of Putative U-box domain-containing protein 46 (PUB46) from Arabidopsis thaliana (Mouse-ear cress).